We begin with the raw amino-acid sequence, 390 residues long: MGTPLKSNSFRVLFCGSGELGKEVVIELQRFGVEVIAIDRYADAPAMQVAHRSHVVDMLDPVALRSVIEKERPNLIVPEIEAIATPELVKLEQEGYRVIPSARAVNLTMNREGIRRLAAEELGLPTSPYRFAGTREEYLQAVAEVGLPLVVKPVMSSSGKGQSTVKTEADIERAWEYAQTGGRAGKGRVIVEGFVDFDYEITLLTVRHKEGITFCEPIGHRQEDGDYRESWQPQPMNDLALQRSKEIARAVVEDLGGYGIYGVELFVKGENVWFSEVSPRPHDTGLVTLVSQDLSEFAIHARAILGIPVPVVRQNGPSASAVILPEGSSTEVSYTGLEEALAQPGTQLRLFGKPELQGRRRMGVALALGSSIEDAREKARTAASSIKVQF.

N(1)-(5-phospho-beta-D-ribosyl)glycinamide-binding positions include 19–20 (EL) and Glu79. Residues Arg111, Lys152, 157-162 (SSGKGQ), 192-195 (EGFV), and Glu200 each bind ATP. The ATP-grasp domain occupies 116 to 305 (RLAAEELGLP…EFAIHARAIL (190 aa)). Positions 264 and 276 each coordinate Mg(2+). Residues Asp283, Lys353, and 360–361 (RR) contribute to the N(1)-(5-phospho-beta-D-ribosyl)glycinamide site.

It belongs to the PurK/PurT family. As to quaternary structure, homodimer.

It catalyses the reaction N(1)-(5-phospho-beta-D-ribosyl)glycinamide + formate + ATP = N(2)-formyl-N(1)-(5-phospho-beta-D-ribosyl)glycinamide + ADP + phosphate + H(+). The protein operates within purine metabolism; IMP biosynthesis via de novo pathway; N(2)-formyl-N(1)-(5-phospho-D-ribosyl)glycinamide from N(1)-(5-phospho-D-ribosyl)glycinamide (formate route): step 1/1. Functionally, involved in the de novo purine biosynthesis. Catalyzes the transfer of formate to 5-phospho-ribosyl-glycinamide (GAR), producing 5-phospho-ribosyl-N-formylglycinamide (FGAR). Formate is provided by PurU via hydrolysis of 10-formyl-tetrahydrofolate. The polypeptide is Formate-dependent phosphoribosylglycinamide formyltransferase (Marinobacter nauticus (strain ATCC 700491 / DSM 11845 / VT8) (Marinobacter aquaeolei)).